Here is a 172-residue protein sequence, read N- to C-terminus: MDLKSLVRDIPDFPKPGILFRDITTLLRDPEGLRYTIDFLTQKCKEAEIKPDYVIGIESRGFIFGSPLAYQLGAGFIPIRKRGKLPAAVHSIEYDLEYGTDCLEVHQDALRHSSRVLIVDDLIATGGTASATAKLVQKIGCELVGFGFIIELRDLEGRKYLPDVPIISLIEY.

This sequence belongs to the purine/pyrimidine phosphoribosyltransferase family. In terms of assembly, homodimer.

Its subcellular location is the cytoplasm. It catalyses the reaction AMP + diphosphate = 5-phospho-alpha-D-ribose 1-diphosphate + adenine. The protein operates within purine metabolism; AMP biosynthesis via salvage pathway; AMP from adenine: step 1/1. Its function is as follows. Catalyzes a salvage reaction resulting in the formation of AMP, that is energically less costly than de novo synthesis. The chain is Adenine phosphoribosyltransferase from Nostoc punctiforme (strain ATCC 29133 / PCC 73102).